A 142-amino-acid polypeptide reads, in one-letter code: Virulence-associated membrane protein 1 (142 aa).

The N-terminal stretch at 1 to 20 (MRGILVALTAALIFCSLTPA) is a signal peptide. A helical membrane pass occupies residues 59–79 (IAIAVGTALVTLVSAGVGGML).

Monomer.

The protein resides in the membrane. In terms of biological role, during infection, may play a role in establishing and maintaining biotrophy; the formation of a tight interaction zone between the host and the pathogen. This Mycosarcoma maydis (Corn smut fungus) protein is Virulence-associated membrane protein 1.